Consider the following 441-residue polypeptide: MKLALLLPWACCCLCGSALATGFLYPFSAAALQQHGYPEPGAGSPGSGYASRRHWCHHTVTRTVSCQVQNGSETVVQRVYQSCRWPGPCANLVSYRTLIRPTYRVSYRTVTVLEWRCCPGFTGSNCDEECMNCTRLSDMSERLTTLEAKVLLLEAAERPSSPDNDLPAPESTPPTWNEDFLPDAIPLAHPVPRQRRPTGPAGPPGQTGPPGPAGPPGSKGDRGQTGEKGPAGPPGLLGPPGPRGLPGEMGRPGPPGPPGPAGNPGPSPNSPQGALYSLQPPTDKDNGDSRLASAIVDTVLAGVPGPRGPPGPPGPPGPRGPPGPPGTPGSQGLAGERGTVGPSGEPGVKGEEGEKAATAEGEGVQQLREALKILAERVLILEHMIGIHDPLASPEGGSGQDAALRANLKMKRGGAQPDGVLAALLGPDPGQKSVDQASSRK.

A signal peptide spans 1-20; sequence MKLALLLPWACCCLCGSALA. The EMI domain maps to 52–128; sequence RRHWCHHTVT…PGFTGSNCDE (77 aa). Disulfide bonds link Cys-56–Cys-118, Cys-83–Cys-89, and Cys-117–Cys-126. Residue Asn-70 is glycosylated (N-linked (GlcNAc...) asparagine). N-linked (GlcNAc...) asparagine glycosylation occurs at Asn-132. 2 disordered regions span residues 156-362 and 390-441; these read AERP…AEGE and PLAS…SSRK. Collagen-like domains are found at residues 199 to 267 and 302 to 355; these read GPAG…PGPS and GVPG…EGEK. 4 stretches are compositionally biased toward pro residues: residues 200 to 215, 231 to 243, 252 to 269, and 306 to 327; these read PAGP…PAGP, AGPP…PGPR, PGPP…PSPN, and PRGP…PPGT. Positions 348–357 are enriched in basic and acidic residues; that stretch reads VKGEEGEKAA.

Homotrimer or heterotrimer. Post-translationally, hydroxylated on proline residues.

It is found in the secreted. The protein resides in the extracellular space. Its subcellular location is the extracellular matrix. This Homo sapiens (Human) protein is Collagen alpha-1(XXVI) chain (COL26A1).